The primary structure comprises 520 residues: Peptide chain release factor 3 (520 aa).

Residues glutamate 8–threonine 277 enclose the tr-type G domain. GTP is bound by residues serine 17–threonine 24, aspartate 85–histidine 89, and asparagine 139–aspartate 142.

It belongs to the TRAFAC class translation factor GTPase superfamily. Classic translation factor GTPase family. PrfC subfamily.

Its subcellular location is the cytoplasm. Increases the formation of ribosomal termination complexes and stimulates activities of RF-1 and RF-2. It binds guanine nucleotides and has strong preference for UGA stop codons. It may interact directly with the ribosome. The stimulation of RF-1 and RF-2 is significantly reduced by GTP and GDP, but not by GMP. This is Peptide chain release factor 3 from Staphylococcus aureus (strain JH1).